Here is a 153-residue protein sequence, read N- to C-terminus: Large ribosomal subunit protein eL15 (153 aa).

K32 is covalently cross-linked (Glycyl lysine isopeptide (Lys-Gly) (interchain with G-Cter in SUMO2)). 2 positions are modified to phosphoserine: S46 and S49. The tract at residues 114–135 (TSAGRKSRGLGKGHKFHHTIGG) is disordered. The span at 118-131 (RKSRGLGKGHKFHH) shows a compositional bias: basic residues.

Belongs to the eukaryotic ribosomal protein eL15 family. As to quaternary structure, component of the large ribosomal subunit. Interacts with IFIT1 (via TPR repeats 1-4).

It localises to the cytoplasm. Its function is as follows. Component of the large ribosomal subunit. The ribosome is a large ribonucleoprotein complex responsible for the synthesis of proteins in the cell. This chain is Large ribosomal subunit protein eL15 (RPL15), found in Sus scrofa (Pig).